Here is a 223-residue protein sequence, read N- to C-terminus: Deoxyribose-phosphate aldolase (223 aa).

Catalysis depends on Asp-92, which acts as the Proton donor/acceptor. Lys-153 acts as the Schiff-base intermediate with acetaldehyde in catalysis. The Proton donor/acceptor role is filled by Lys-182.

The protein belongs to the DeoC/FbaB aldolase family. DeoC type 1 subfamily.

Its subcellular location is the cytoplasm. The catalysed reaction is 2-deoxy-D-ribose 5-phosphate = D-glyceraldehyde 3-phosphate + acetaldehyde. The protein operates within carbohydrate degradation; 2-deoxy-D-ribose 1-phosphate degradation; D-glyceraldehyde 3-phosphate and acetaldehyde from 2-deoxy-alpha-D-ribose 1-phosphate: step 2/2. In terms of biological role, catalyzes a reversible aldol reaction between acetaldehyde and D-glyceraldehyde 3-phosphate to generate 2-deoxy-D-ribose 5-phosphate. The sequence is that of Deoxyribose-phosphate aldolase from Mycoplasmoides gallisepticum (strain R(low / passage 15 / clone 2)) (Mycoplasma gallisepticum).